The chain runs to 407 residues: Putative F-box protein At2g16220 (407 aa).

Residues 1–45 enclose the F-box domain; that stretch reads MNSHFLTNDLILEVLSRLPLKSVARFHCVSKRWASMFGSPYFKEL. The disordered stretch occupies residues 385 to 407; it reads PPSVQPEYDESDSESEEDREIII. The span at 391–407 shows a compositional bias: acidic residues; it reads EYDESDSESEEDREIII.

In Arabidopsis thaliana (Mouse-ear cress), this protein is Putative F-box protein At2g16220.